A 248-amino-acid polypeptide reads, in one-letter code: Triosephosphate isomerase (248 aa).

9–11 (NWK) provides a ligand contact to substrate. The active-site Electrophile is His-94. Glu-166 (proton acceptor) is an active-site residue. Substrate is bound by residues Gly-172, Ser-212, and 233-234 (GG).

This sequence belongs to the triosephosphate isomerase family. In terms of assembly, homodimer.

It localises to the cytoplasm. It carries out the reaction D-glyceraldehyde 3-phosphate = dihydroxyacetone phosphate. It functions in the pathway carbohydrate biosynthesis; gluconeogenesis. It participates in carbohydrate degradation; glycolysis; D-glyceraldehyde 3-phosphate from glycerone phosphate: step 1/1. Its function is as follows. Involved in the gluconeogenesis. Catalyzes stereospecifically the conversion of dihydroxyacetone phosphate (DHAP) to D-glyceraldehyde-3-phosphate (G3P). The chain is Triosephosphate isomerase from Clostridium botulinum (strain Langeland / NCTC 10281 / Type F).